Consider the following 1358-residue polypeptide: DNA-directed RNA polymerase subunit beta (1358 aa).

The protein belongs to the RNA polymerase beta chain family. As to quaternary structure, the RNAP catalytic core consists of 2 alpha, 1 beta, 1 beta' and 1 omega subunit. When a sigma factor is associated with the core the holoenzyme is formed, which can initiate transcription.

The catalysed reaction is RNA(n) + a ribonucleoside 5'-triphosphate = RNA(n+1) + diphosphate. Its function is as follows. DNA-dependent RNA polymerase catalyzes the transcription of DNA into RNA using the four ribonucleoside triphosphates as substrates. This is DNA-directed RNA polymerase subunit beta from Francisella tularensis subsp. holarctica (strain OSU18).